We begin with the raw amino-acid sequence, 346 residues long: Phosphoribosylformylglycinamidine cyclo-ligase (346 aa).

The protein belongs to the AIR synthase family.

The protein localises to the cytoplasm. The enzyme catalyses 2-formamido-N(1)-(5-O-phospho-beta-D-ribosyl)acetamidine + ATP = 5-amino-1-(5-phospho-beta-D-ribosyl)imidazole + ADP + phosphate + H(+). It participates in purine metabolism; IMP biosynthesis via de novo pathway; 5-amino-1-(5-phospho-D-ribosyl)imidazole from N(2)-formyl-N(1)-(5-phospho-D-ribosyl)glycinamide: step 2/2. This is Phosphoribosylformylglycinamidine cyclo-ligase from Vibrio campbellii (strain ATCC BAA-1116).